The primary structure comprises 386 residues: Homeobox protein Hox-A13 (386 aa).

A DNA-binding region (homeobox) is located at residues 320–379 (GRKKRVPYTKVQLKELEREYATNKFITKDKRRRISATTNLSERQVTIWFQNRRVKEKKVI).

Belongs to the Abd-B homeobox family. In terms of assembly, binds DNA as a homodimer. Interacts with MEIS1, MEIS2 and MEIS3.

The protein resides in the nucleus. Sequence-specific, AT-rich binding transcription factor which is part of a developmental regulatory system that provides cells with specific positional identities on the anterior-posterior axis. The chain is Homeobox protein Hox-A13 (Hoxa13) from Mus musculus (Mouse).